Reading from the N-terminus, the 183-residue chain is Integrase-like protein y4lS (183 aa).

The region spanning 2 to 136 is the Resolvase/invertase-type recombinase catalytic domain; sequence ARIGYARTFT…EGIAAARKRG (135 aa).

The protein belongs to the site-specific recombinase resolvase family.

This is Integrase-like protein y4lS from Sinorhizobium fredii (strain NBRC 101917 / NGR234).